We begin with the raw amino-acid sequence, 96 residues long: HIG1 domain family member 1C (96 aa).

Over 1–26 (MSSDEWSAAEDEGQLSRLLRKSRDSP) the chain is Cytoplasmic. The HIG1 domain maps to 1 to 91 (MSSDEWSAAE…YKDYIRPRFF (91 aa)). Residues 27-44 (FVPVGMAGFVAVLSYGLY) form a helical membrane-spanning segment. At 45–58 (KLNSRREQKMSLHL) the chain is on the extracellular side. A helical membrane pass occupies residues 59-81 (IHVRVAAQGCVVGAVTLGVLYSM). At 82–96 (YKDYIRPRFFNVPKK) the chain is on the cytoplasmic side.

It localises to the membrane. The protein is HIG1 domain family member 1C (Higd1c) of Mus musculus (Mouse).